The sequence spans 122 residues: Large ribosomal subunit protein uL14c (122 aa).

This sequence belongs to the universal ribosomal protein uL14 family. As to quaternary structure, part of the 50S ribosomal subunit.

It localises to the plastid. It is found in the chloroplast. In terms of biological role, binds to 23S rRNA. This is Large ribosomal subunit protein uL14c from Marchantia polymorpha (Common liverwort).